Reading from the N-terminus, the 747-residue chain is MRRCNSGSGPPPSLLLLLLWLLAVPGANAAPRSALYSPSDPLTLLQADTVRGAVLGSRSAWAVEFFASWCGHCIAFAPTWKALAEDVKAWRPALYLAALDCAEETNSAVCRDFNIPGFPTVRFFKAFTKNGSGAVFPVAGADVQTLRERLIDALESHHDTWPPACPPLEPAKLEEIDGFFARNNEEYLALIFEKGGSYLGREVALDLSQHKGVAVRRVLNTEANVVRKFGVTDFPSCYLLFRNGSVSRVPVLMESRSFYTAYLQRLSGLTREAAQTTVAPTTANKIAPTVWKLADRSKIYMADLESALHYILRIEVGRFPVLEGQRLVALKKFVAVLAKYFPGRPLVQNFLHSVNEWLKRQKRNKIPYSFFKTALDDRKEGAVLAKKVNWIGCQGSEPHFRGFPCSLWVLFHFLTVQAARQNVDHSQEAAKAKEVLPAIRGYVHYFFGCRDCASHFEQMAAASMHRVGSPNAAVLWLWSSHNRVNARLAGAPSEDPQFPKVQWPPRELCSACHNERLDVPVWDVEATLNFLKAHFSPSNIILDFPAAGSAARRDVQNVAAAPELAMGALELESRNSTLDPGKPEMMKSPTNTTPHVPAEGPEASRPPKLHPGLRAAPGQEPPEHMAELQRNEQEQPLGQWHLSKRDTGAALLAESRAEKNRLWGPLEVRRVGRSSKQLVDIPEGQLEARAGRGRGQWLQVLGGGFSYLDISLCVGLYSLSFMGLLAMYTYFQAKIRALKGHAGHPAA.

The signal sequence occupies residues 1–29; sequence MRRCNSGSGPPPSLLLLLLWLLAVPGANA. Residues 36-156 enclose the Thioredoxin domain; the sequence is YSPSDPLTLL…RERLIDALES (121 aa). Active-site nucleophile residues include Cys-70 and Cys-73. 2 disulfides stabilise this stretch: Cys-70/Cys-73 and Cys-101/Cys-110. Residue Asn-130 is glycosylated (N-linked (GlcNAc...) (complex) asparagine). N-linked (GlcNAc...) asparagine glycosylation occurs at Asn-243. Cys-393 and Cys-405 are disulfide-bonded. The ERV/ALR sulfhydryl oxidase domain maps to 396–503; the sequence is SEPHFRGFPC…EDPQFPKVQW (108 aa). Residues Arg-401, Trp-408, and His-412 each contribute to the FAD site. Ser-426 is modified (phosphoserine; by FAM20C). Cys-449 and Cys-452 are oxidised to a cystine. Residues Asp-451, His-455, 478–485, Lys-500, and Trp-503 each bind FAD; that span reads WSSHNRVN. The cysteines at positions 509 and 512 are disulfide-linked. A disordered region spans residues 573–633; it reads SRNSTLDPGK…HMAELQRNEQ (61 aa). A glycan (N-linked (GlcNAc...) asparagine) is linked at Asn-575. Over residues 621–633 the composition is skewed to basic and acidic residues; the sequence is PPEHMAELQRNEQ. A helical membrane pass occupies residues 710-730; that stretch reads ISLCVGLYSLSFMGLLAMYTY.

Belongs to the quiescin-sulfhydryl oxidase (QSOX) family. Monomer. FAD is required as a cofactor. N-glycosylated. O-glycosylated on Thr and Ser residues. Expressed in heart, placenta, lung, liver, skeletal muscle, pancreas and very weakly in brain and kidney.

The protein resides in the golgi apparatus membrane. It localises to the secreted. It catalyses the reaction 2 R'C(R)SH + O2 = R'C(R)S-S(R)CR' + H2O2. Catalyzes the oxidation of sulfhydryl groups in peptide and protein thiols to disulfides with the reduction of oxygen to hydrogen peroxide. Plays a role in disulfide bond formation in a variety of extracellular proteins. In fibroblasts, required for normal incorporation of laminin into the extracellular matrix, and thereby for normal cell-cell adhesion and cell migration. The chain is Sulfhydryl oxidase 1 (QSOX1) from Homo sapiens (Human).